Consider the following 450-residue polypeptide: UDP-N-acetylmuramoylalanine--D-glutamate ligase (450 aa).

Residue Gly119–Thr125 coordinates ATP.

It belongs to the MurCDEF family.

It localises to the cytoplasm. It carries out the reaction UDP-N-acetyl-alpha-D-muramoyl-L-alanine + D-glutamate + ATP = UDP-N-acetyl-alpha-D-muramoyl-L-alanyl-D-glutamate + ADP + phosphate + H(+). It participates in cell wall biogenesis; peptidoglycan biosynthesis. Its function is as follows. Cell wall formation. Catalyzes the addition of glutamate to the nucleotide precursor UDP-N-acetylmuramoyl-L-alanine (UMA). The chain is UDP-N-acetylmuramoylalanine--D-glutamate ligase from Streptococcus gordonii (strain Challis / ATCC 35105 / BCRC 15272 / CH1 / DL1 / V288).